A 141-amino-acid polypeptide reads, in one-letter code: Large ribosomal subunit protein uL11 (141 aa).

Belongs to the universal ribosomal protein uL11 family. In terms of assembly, part of the ribosomal stalk of the 50S ribosomal subunit. Interacts with L10 and the large rRNA to form the base of the stalk. L10 forms an elongated spine to which L12 dimers bind in a sequential fashion forming a multimeric L10(L12)X complex. In terms of processing, one or more lysine residues are methylated.

Its function is as follows. Forms part of the ribosomal stalk which helps the ribosome interact with GTP-bound translation factors. The protein is Large ribosomal subunit protein uL11 of Synechocystis sp. (strain ATCC 27184 / PCC 6803 / Kazusa).